Consider the following 316-residue polypeptide: Methionyl-tRNA formyltransferase (316 aa).

(6S)-5,6,7,8-tetrahydrofolate is bound at residue 111–114; the sequence is GLLP.

The protein belongs to the Fmt family.

The catalysed reaction is L-methionyl-tRNA(fMet) + (6R)-10-formyltetrahydrofolate = N-formyl-L-methionyl-tRNA(fMet) + (6S)-5,6,7,8-tetrahydrofolate + H(+). In terms of biological role, attaches a formyl group to the free amino group of methionyl-tRNA(fMet). The formyl group appears to play a dual role in the initiator identity of N-formylmethionyl-tRNA by promoting its recognition by IF2 and preventing the misappropriation of this tRNA by the elongation apparatus. The protein is Methionyl-tRNA formyltransferase of Chlamydia trachomatis serovar L2b (strain UCH-1/proctitis).